The sequence spans 294 residues: Acetylglutamate kinase (294 aa).

Substrate is bound by residues 47–48, arginine 69, and asparagine 168; that span reads GG.

Belongs to the acetylglutamate kinase family. ArgB subfamily.

It localises to the cytoplasm. The catalysed reaction is N-acetyl-L-glutamate + ATP = N-acetyl-L-glutamyl 5-phosphate + ADP. Its pathway is amino-acid biosynthesis; L-arginine biosynthesis; N(2)-acetyl-L-ornithine from L-glutamate: step 2/4. Catalyzes the ATP-dependent phosphorylation of N-acetyl-L-glutamate. This chain is Acetylglutamate kinase, found in Corynebacterium glutamicum (strain ATCC 13032 / DSM 20300 / JCM 1318 / BCRC 11384 / CCUG 27702 / LMG 3730 / NBRC 12168 / NCIMB 10025 / NRRL B-2784 / 534).